The sequence spans 603 residues: Terpenoid synthase 25 (603 aa).

Residues Asp-356, Asp-360, Asn-500, Thr-504, and Glu-508 each coordinate Mg(2+). Positions 356-360 (DDTCD) match the DDXXD motif motif.

This sequence belongs to the terpene synthase family. Tpsa subfamily. The cofactor is Mg(2+). Mn(2+) serves as cofactor. In terms of tissue distribution, predominantly expressed in roots but also in flowers.

The protein localises to the cytoplasm. It functions in the pathway secondary metabolite biosynthesis; terpenoid biosynthesis. In terms of biological role, involved in terpene biosynthesis in roots. Possesses sesquiterpene (C15) synthase activity in vitro. Does not seem to be involved in diterpene (C20) biosynthesis. In Arabidopsis thaliana (Mouse-ear cress), this protein is Terpenoid synthase 25.